The following is a 359-amino-acid chain: MIAAQAKLVYHLNKYYNEKCQARKAAIAKTIREVCKVVSDVLKEVEVQEPRFISSLNEMDNRYEGLEVISPTEFEVVLYLNQMGVFNFVDDGSLPGCAVLKLSDGRKRSMSLWVEFITASGYLSARKIRSRFQTLVAQAVDKCSYRDVVKMVADTSEVKLRIRDRYVVQITPAFKCTGIWPRSAAHWPLPHIPWPGPNRVAEVKAEGFNLLSKECHSLAGKQSSAESDAWVLQFAEAENRLQMGGCRKKCLSILKTLRDRHLELPGQPLNNYHMKTLVSYECEKHPRESDWDESCLGDRLNGILLQLISCLQCRRCPHYFLPNLDLFQGKPHSALENAAKQTWRLAREILTNPKSLEKL.

A ribonucleoside 5'-triphosphate contacts are provided by residues 23–24 and 63–66; these read RK and YEGL. Residues Glu-73 and Glu-75 each coordinate Mg(2+). Residues Lys-248 and 252-255 each bind a ribonucleoside 5'-triphosphate; that span reads SILK.

It belongs to the mab-21 family. In terms of assembly, monomer. Homodecamer; composed of 2 back to back homopentamers. The protein may exist as monomer in solution and oiligomerizes upon ligand binding.

It is found in the nucleus. In terms of biological role, putative nucleotidyltransferase required for several aspects of embryonic development including normal development of the eye. It is unclear whether it displays nucleotidyltransferase activity in vivo. Binds single-stranded RNA (ssRNA). This Bos taurus (Bovine) protein is Putative nucleotidyltransferase MAB21L1 (MAB21L1).